A 395-amino-acid chain; its full sequence is Chalcone synthase 1 (395 aa).

Residue V2 is modified to N-acetylvaline. C169 is a catalytic residue.

Belongs to the thiolase-like superfamily. Chalcone/stilbene synthases family.

The catalysed reaction is (E)-4-coumaroyl-CoA + 3 malonyl-CoA + 3 H(+) = 2',4,4',6'-tetrahydroxychalcone + 3 CO2 + 4 CoA. It participates in secondary metabolite biosynthesis; flavonoid biosynthesis. Functionally, the primary product of this enzyme is 4,2',4',6'-tetrahydroxychalcone (also termed naringenin-chalcone or chalcone) which can under specific conditions spontaneously isomerize into naringenin. The protein is Chalcone synthase 1 (CHS1) of Sinapis alba (White mustard).